A 377-amino-acid chain; its full sequence is Metallo-hydrolase mfmC (377 aa).

Zn(2+) contacts are provided by His-126, His-128, Asp-130, His-131, His-209, and Asp-233.

This sequence belongs to the metallo-beta-lactamase superfamily.

It functions in the pathway secondary metabolite biosynthesis; terpenoid biosynthesis. Its function is as follows. Metallo-hydrolase; part of the gene cluster that mediates the biosynthesis of the phthalide-terpenoid hybrid 11'-O-desmethylfendlerol. Within the pathway, mfma and mfmC act together to convert 3,5-dimethylorsellinic acid (DMOA) into the phthalide 5,7-dihydroxy-4-(hydroxymethyl)-6-methylphthalide. The biosynthesis of 11'-O-desmethylfendlerol begins with the NR-PKS mfmB that forms 3,5-dimethylorsellinic acid (DMOA), which is then transformed into the phthalide 5,7-dihydroxy-4-(hydroxymethyl)-6-methylphthalide by the cytochrome P450 monooxygenase mfmA and the hydrolase mfmC. Subsequently, the methyltransferase mfmE catalyzes 7-O-methylation to yield 5-hydroxy-4-(hydroxymethyl)-7-methoxy-6-methylphthalide, which undergoes C-3 hydroxylation by the cytochrome P450 monooxygenase mfmF. The resultant cyclopolic acid (2,5-dihydroxy-4-(hydroxymethyl)-7-methoxy-6-methylphthalide) is then farnesylated by the DMATS-type prenyltransferase mfmD to afford 5-O-farnesylcyclopolic acid. Finally, the Pyr4-family terpene cyclase mfmH cyclizes the farnesyl moiety of 5-O-farnesylcyclopolic acid into a drimane-like structure, thus completing the biosynthesis of 11'-O-desmethylfendlerol. The chain is Metallo-hydrolase mfmC from Annulohypoxylon moriforme (Filamentous fungus).